The chain runs to 644 residues: Chaperone protein DnaK (644 aa).

Thr-195 bears the Phosphothreonine; by autocatalysis mark. Residues 598–644 form a disordered region; sequence KQAAPGAGAPGAGPGPEAAGGAQQAQAEPKKDEGVIDAEYVDVDEKK. Positions 612–624 are enriched in low complexity; sequence GPEAAGGAQQAQA. The span at 632–644 shows a compositional bias: acidic residues; it reads VIDAEYVDVDEKK.

The protein belongs to the heat shock protein 70 family.

In terms of biological role, acts as a chaperone. In Koribacter versatilis (strain Ellin345), this protein is Chaperone protein DnaK.